A 376-amino-acid chain; its full sequence is Probable ureide permease A3 (376 aa).

At 1 to 9 (HLVESKGGA) the chain is on the extracellular side. The helical transmembrane segment at 10 to 30 (IACMFLALFFLGTWPALLTML) threads the bilayer. Over 31–41 (ERRGRLPQHTY) the chain is Cytoplasmic. A helical membrane pass occupies residues 42 to 62 (LDYSITNFFAALLIAFTFGEI). Residues 63–80 (GKGKPDEPNFLAQLAQDN) lie on the Extracellular side of the membrane. Residues 81 to 101 (WPSVLFAMGGGVVLSLGNLSS) form a helical membrane-spanning segment. The Cytoplasmic portion of the chain corresponds to 102 to 103 (QY). Residues 104–124 (AFAFVGLSVTEVITASITVVI) form a helical membrane-spanning segment. Residues 125 to 137 (GTTLNYFLDDKIN) lie on the Extracellular side of the membrane. The helical transmembrane segment at 138-158 (KAEILFPGVGCFLIAVFLGFC) threads the bilayer. The Cytoplasmic portion of the chain corresponds to 159–231 (RFNSSNASDN…RAIKVFGKST (73 aa)). 223–230 (AIKVFGKS) contacts ATP. Residues 232–252 (LIGLALTFSAGLCFSMFSPAF) form a helical membrane-spanning segment. Topologically, residues 253 to 274 (NLATNDQWHTLPNGIPHLTVYT) are extracellular. A helical transmembrane segment spans residues 275-295 (AFFYFSISCFVIAIILNITFL). At 296–317 (YHPVLNLPKSSLKAYLADSDGR) the chain is on the cytoplasmic side. The chain crosses the membrane as a helical span at residues 318-338 (IWALLAGLLCGFGNSLQFMGG). At 339–376 (QAAGYQQQSLCRHFLCKHFWGVLLFGEYRRSSRKTYIC) the chain is on the extracellular side.

It belongs to the plant ureide permease (TC 2.A.7.19) family.

The protein localises to the membrane. Its function is as follows. Transports a wide spectrum of oxo derivatives of heterocyclic nitrogen compounds. This Vigna unguiculata (Cowpea) protein is Probable ureide permease A3 (A3).